A 467-amino-acid polypeptide reads, in one-letter code: L-seryl-tRNA(Sec) selenium transferase (467 aa).

N6-(pyridoxal phosphate)lysine is present on K298.

Belongs to the SelA family. Pyridoxal 5'-phosphate serves as cofactor.

The protein localises to the cytoplasm. The enzyme catalyses L-seryl-tRNA(Sec) + selenophosphate + H(+) = L-selenocysteinyl-tRNA(Sec) + phosphate. Its pathway is aminoacyl-tRNA biosynthesis; selenocysteinyl-tRNA(Sec) biosynthesis; selenocysteinyl-tRNA(Sec) from L-seryl-tRNA(Sec) (bacterial route): step 1/1. Its function is as follows. Converts seryl-tRNA(Sec) to selenocysteinyl-tRNA(Sec) required for selenoprotein biosynthesis. In Alkaliphilus metalliredigens (strain QYMF), this protein is L-seryl-tRNA(Sec) selenium transferase.